The following is a 298-amino-acid chain: uncharacterized protein (298 aa).

The segment at 264–298 is disordered; that stretch reads APPPPLPCITTGPAALEDSPKASKANKGKKAKAKK. Positions 287–298 are enriched in basic residues; the sequence is KANKGKKAKAKK.

This is an uncharacterized protein from Mus musculus (Mouse).